Consider the following 341-residue polypeptide: HTH-type transcriptional repressor PurR (341 aa).

Residues 2–56 (ATIKDVAKRANVSTTTVSHVINKTRFVAEETRNAVWAAIKELHYSPSAVARSLKV) enclose the HTH lacI-type domain. Residues 4–23 (IKDVAKRANVSTTTVSHVIN) constitute a DNA-binding region (H-T-H motif). A DNA-binding region spans residues 48 to 56 (SAVARSLKV). Tyr73, Arg190, Thr192, Phe221, and Asp275 together coordinate hypoxanthine.

In terms of assembly, homodimer.

It functions in the pathway purine metabolism; purine nucleotide biosynthesis [regulation]. In terms of biological role, is the main repressor of the genes involved in the de novo synthesis of purine nucleotides, regulating purB, purC, purEK, purF, purHD, purL, purMN and guaBA expression. PurR is allosterically activated to bind its cognate DNA by binding the purine corepressors, hypoxanthine or guanine, thereby effecting transcription repression. The polypeptide is HTH-type transcriptional repressor PurR (Klebsiella pneumoniae subsp. pneumoniae (strain ATCC 700721 / MGH 78578)).